A 365-amino-acid polypeptide reads, in one-letter code: Glycosyltransferase 8 domain-containing protein 1 (365 aa).

The Cytoplasmic portion of the chain corresponds to 1–4 (MTVR). The helical; Signal-anchor for type II membrane protein transmembrane segment at 5–22 (RVNVVILVLLVVAFLIVL) threads the bilayer. Residues 23–365 (HRNLLNLNDF…HPIRKHVEEK (343 aa)) lie on the Lumenal side of the membrane. N-linked (GlcNAc...) asparagine glycosylation is found at N102, N181, N245, and N253.

This sequence belongs to the glycosyltransferase 8 family.

The protein localises to the membrane. The polypeptide is Glycosyltransferase 8 domain-containing protein 1 (glt8d1) (Danio rerio (Zebrafish)).